The chain runs to 429 residues: Adenylosuccinate synthetase (429 aa).

GTP-binding positions include 12–18 (GDEGKGK) and 40–42 (GHT). Asp13 acts as the Proton acceptor in catalysis. Residues Asp13 and Gly40 each coordinate Mg(2+). IMP-binding positions include 13–16 (DEGK), 38–41 (NAGH), Thr128, Arg142, Gln223, Thr238, and Arg302. Catalysis depends on His41, which acts as the Proton donor. 298 to 304 (TVTKRPR) lines the substrate pocket. GTP is bound by residues Arg304, 330–332 (CLD), and 412–414 (SVG).

This sequence belongs to the adenylosuccinate synthetase family. As to quaternary structure, homodimer. The cofactor is Mg(2+).

Its subcellular location is the cytoplasm. It carries out the reaction IMP + L-aspartate + GTP = N(6)-(1,2-dicarboxyethyl)-AMP + GDP + phosphate + 2 H(+). It participates in purine metabolism; AMP biosynthesis via de novo pathway; AMP from IMP: step 1/2. Plays an important role in the de novo pathway of purine nucleotide biosynthesis. Catalyzes the first committed step in the biosynthesis of AMP from IMP. In Lactiplantibacillus plantarum (strain ATCC BAA-793 / NCIMB 8826 / WCFS1) (Lactobacillus plantarum), this protein is Adenylosuccinate synthetase.